Reading from the N-terminus, the 220-residue chain is Thiopurine S-methyltransferase (220 aa).

The S-adenosyl-L-methionine site is built by W14, L49, E70, and R127.

This sequence belongs to the class I-like SAM-binding methyltransferase superfamily. TPMT family.

It localises to the cytoplasm. It catalyses the reaction S-adenosyl-L-methionine + a thiopurine = S-adenosyl-L-homocysteine + a thiopurine S-methylether.. This chain is Thiopurine S-methyltransferase, found in Gluconobacter oxydans (strain 621H) (Gluconobacter suboxydans).